Reading from the N-terminus, the 220-residue chain is Vesicle-associated protein 2-1 (220 aa).

N-acetylmethionine is present on methionine 1. Topologically, residues 1-196 (MTGVGENQLI…RNSGNGLSLK (196 aa)) are cytoplasmic. An N-acetylthreonine; in Vesicle-associated protein 2-1, N-terminally processed modification is found at threonine 2. Residues 9–129 (LISIQPDELK…TECKLKVSYI (121 aa)) enclose the MSP domain. The segment at 133–154 (TTQRSSESGATNGDGQSSETIS) is disordered. Positions 153–188 (ISTIQRLKEERDAAVKQTQQLQHELETVRRRRNQRN) form a coiled coil. Residues 197–217 (LAAMVGLIGLIIGFILKLTLA) form a helical; Anchor for type IV membrane protein membrane-spanning segment.

Belongs to the VAMP-associated protein (VAP) (TC 9.B.17) family.

It is found in the endoplasmic reticulum membrane. May play a role in vesicle trafficking. This chain is Vesicle-associated protein 2-1 (PVA21), found in Arabidopsis thaliana (Mouse-ear cress).